The chain runs to 363 residues: Ribosomal RNA large subunit methyltransferase M (363 aa).

S-adenosyl-L-methionine contacts are provided by residues Ser194, 227-230 (CPGG), Asp246, Asp266, and Asp284. Lys313 serves as the catalytic Proton acceptor.

It belongs to the class I-like SAM-binding methyltransferase superfamily. RNA methyltransferase RlmE family. RlmM subfamily. As to quaternary structure, monomer.

It localises to the cytoplasm. The enzyme catalyses cytidine(2498) in 23S rRNA + S-adenosyl-L-methionine = 2'-O-methylcytidine(2498) in 23S rRNA + S-adenosyl-L-homocysteine + H(+). Catalyzes the 2'-O-methylation at nucleotide C2498 in 23S rRNA. The protein is Ribosomal RNA large subunit methyltransferase M of Haemophilus influenzae (strain 86-028NP).